A 77-amino-acid chain; its full sequence is Translation initiation factor IF-1, chloroplastic (77 aa).

Residues 1-71 (MKEQKWIHEG…TRGRIIYRLR (71 aa)) form the S1-like domain.

The protein belongs to the IF-1 family. As to quaternary structure, component of the 30S ribosomal translation pre-initiation complex which assembles on the 30S ribosome in the order IF-2 and IF-3, IF-1 and N-formylmethionyl-tRNA(fMet); mRNA recruitment can occur at any time during PIC assembly.

It is found in the plastid. Its subcellular location is the chloroplast. In terms of biological role, one of the essential components for the initiation of protein synthesis. Stabilizes the binding of IF-2 and IF-3 on the 30S subunit to which N-formylmethionyl-tRNA(fMet) subsequently binds. Helps modulate mRNA selection, yielding the 30S pre-initiation complex (PIC). Upon addition of the 50S ribosomal subunit IF-1, IF-2 and IF-3 are released leaving the mature 70S translation initiation complex. The polypeptide is Translation initiation factor IF-1, chloroplastic (Spinacia oleracea (Spinach)).